Reading from the N-terminus, the 407-residue chain is Probable 2,3-bisphosphoglycerate-independent phosphoglycerate mutase (407 aa).

Residues 175–200 (GSDAINDTDPQQVGKEPLEPKGENPN) form a disordered region.

It belongs to the BPG-independent phosphoglycerate mutase family. A-PGAM subfamily.

The enzyme catalyses (2R)-2-phosphoglycerate = (2R)-3-phosphoglycerate. It functions in the pathway carbohydrate degradation; glycolysis; pyruvate from D-glyceraldehyde 3-phosphate: step 3/5. Catalyzes the interconversion of 2-phosphoglycerate and 3-phosphoglycerate. The protein is Probable 2,3-bisphosphoglycerate-independent phosphoglycerate mutase of Aquifex aeolicus (strain VF5).